Reading from the N-terminus, the 344-residue chain is Ion-translocating oxidoreductase complex subunit D (344 aa).

4 helical membrane-spanning segments follow: residues 23–43 (LVLG…GPGT), 44–64 (LLNL…MLAL), 77–99 (SALV…WLTL), and 120–140 (PFNP…LEMT). Thr172 carries the post-translational modification FMN phosphoryl threonine. Helical transmembrane passes span 198–218 (LGSA…LFLL), 222–242 (LFTW…SLLF), 252–272 (GSPL…FIVT), 285–305 (LVFG…GGYP), and 306–326 (DGMA…DYYT).

The protein belongs to the NqrB/RnfD family. In terms of assembly, the complex is composed of six subunits: RnfA, RnfB, RnfC, RnfD, RnfE and RnfG. The cofactor is FMN.

The protein resides in the cell inner membrane. In terms of biological role, part of a membrane-bound complex that couples electron transfer with translocation of ions across the membrane. This Pseudomonas aeruginosa (strain LESB58) protein is Ion-translocating oxidoreductase complex subunit D.